Here is a 980-residue protein sequence, read N- to C-terminus: MGPRALLVLLVATAWHAQGVPVIQPSGPELVVEPGTTVTLRCVGNGSVEWDGPISPHWNLDLDPPSSILTTNNATFQNTGTYHCTEPGNPQGGNATIHLYVKDPARPWKVLAQEVTVLEGQDALLPCLLTDPALEAGVSLVRVRGRPVLRQTNYSFSPWHGFTIHKAKFIENHVYQCSARVDGRTVTSMGIWLKVQKDISGPATLTLEPAELVRIQGEAAQIVCSASNIDVNFDVSLRHGDTKLTISQQSDFHDNRYQKVLTLNLDHVSFQDAGNYSCTATNAWGNHSASMVFRVVESAYLNLTSEQSLLQEVTVGEKVDLQVKVEAYPGLESFNWTYLGPFSDYQDKLDFVTIKDTYRYTSTLSLPRLKRSEAGRYSFLARNAGGQNALTFELTLRYPPEVRVTMTLINGSDTLLCEASGYPQPSVTWVQCRSHTDRCDESAGLVLEDSHSEVLSQVPFHEVIVHSLLAIGTLEHNRTYECRAFNSVGNSSQTFWPISIGAHTQLPDELLFTPVLLTCMSIMALLLLLLLLLLYKYKQKPKYQVRWKIIESYEGNSYTFIDPTQLPYNEKWEFPRNNLQFGKTLGAGAFGKVVEATAFGLGKEDAVLKVAVKMLKSTAHADEKEALMSELKIMSHLGQHENIVNLLGACTHGGPVLVITEYCCYGDLLNFLRRQAEAMLGPSLSVGQDPEAGAGYKNIHLEKKYVRRDSDFSSQGVDTYVEMRPVSTSSSNDSFSEEDLGKEDGRPLELRDLLHFSSQVAQGMAFLASKNCIHRDVAARNVLLTSGRVAKIGDFGLARDIMNDSNYIVKGNARLPVKWMAPESIFDCVYTVQSDVWSYGILLWEIFSLGLNPYPGILVNSKFYKLVKDGYQMAQPAFAPKNIYSIMQACWALEPTRRPTFQQICSLLQKQAQEDRRVPNYTNLPSSSSSSSSSSSSCRTGSGGGSSSEPEEESSSEHLACCEQGDIAQPLLQPNNYQFC.

An N-terminal signal peptide occupies residues 1–19 (MGPRALLVLLVATAWHAQG). At 20-514 (VPVIQPSGPE…QLPDELLFTP (495 aa)) the chain is on the extracellular side. Ig-like C2-type domains lie at 21–100 (PVIQ…IHLY), 107–197 (PWKV…KVQK), 202–297 (PATL…RVVE), 299–397 (AYLN…LTLR), and 400–499 (PEVR…WPIS). A disulfide bridge links Cys42 with Cys84. N-linked (GlcNAc...) asparagine glycosylation is found at Asn45, Asn73, Asn94, Asn153, Asn275, Asn286, Asn302, Asn335, Asn410, Asn477, and Asn490. 2 disulfide bridges follow: Cys127/Cys177 and Cys224/Cys278. Cys417 and Cys482 are oxidised to a cystine. Residues 515 to 535 (VLLTCMSIMALLLLLLLLLLY) traverse the membrane as a helical segment. Topologically, residues 536–980 (KYKQKPKYQV…LLQPNNYQFC (445 aa)) are cytoplasmic. A regulatory juxtamembrane domain region spans residues 539-571 (QKPKYQVRWKIIESYEGNSYTFIDPTQLPYNEK). A phosphotyrosine; by autocatalysis mark is found at Tyr543 and Tyr558. Residues 579-908 (LQFGKTLGAG…PTFQQICSLL (330 aa)) enclose the Protein kinase domain. ATP contacts are provided by residues 585–593 (LGAGAFGKV) and Lys613. 2 positions are modified to phosphotyrosine; by autocatalysis: Tyr696 and Tyr705. Ser710 is modified (phosphoserine). Phosphotyrosine; by autocatalysis is present on Tyr720. A disordered region spans residues 723 to 743 (MRPVSTSSSNDSFSEEDLGKE). Asp776 acts as the Proton acceptor in catalysis. An activation loop region spans residues 794-816 (DFGLARDIMNDSNYIVKGNARLP). Phosphotyrosine; by autocatalysis is present on residues Tyr807 and Tyr921. The interval 918–959 (VPNYTNLPSSSSSSSSSSSSCRTGSGGGSSSEPEEESSSEHL) is disordered. The segment covering 926–940 (SSSSSSSSSSSSCRT) has biased composition (low complexity). Tyr977 is subject to Phosphotyrosine; by autocatalysis.

Belongs to the protein kinase superfamily. Tyr protein kinase family. CSF-1/PDGF receptor subfamily. In terms of assembly, monomer. Homodimer. Interacts with CSF1 and IL34. Interaction with dimeric CSF1 or IL34 leads to receptor homodimerization. Interacts with INPPL1/SHIP2 and THOC5. Interacts (tyrosine phosphorylated) with PLCG2 (via SH2 domain). Interacts (tyrosine phosphorylated) with PIK3R1 (via SH2 domain). Interacts (tyrosine phosphorylated) with FYN, YES1 and SRC (via SH2 domain). Interacts (tyrosine phosphorylated) with CBL, GRB2 and SLA2. Autophosphorylated in response to CSF1 or IL34 binding. Phosphorylation at Tyr-558 is important for normal down-regulation of signaling by ubiquitination, internalization and degradation. Phosphorylation at Tyr-558 and Tyr-807 is important for interaction with SRC family members, including FYN, YES1 and SRC, and for subsequent activation of these protein kinases. Phosphorylation at Tyr-696 and Tyr-921 is important for interaction with GRB2. Phosphorylation at Tyr-720 is important for interaction with PIK3R1. Phosphorylation at Tyr-720 and Tyr-807 is important for interaction with PLCG2. Phosphorylation at Tyr-977 is important for interaction with CBL. Dephosphorylation by PTPN2 negatively regulates downstream signaling and macrophage differentiation. Post-translationally, ubiquitinated. Becomes rapidly polyubiquitinated after autophosphorylation, leading to its degradation.

Its subcellular location is the cell membrane. The catalysed reaction is L-tyrosyl-[protein] + ATP = O-phospho-L-tyrosyl-[protein] + ADP + H(+). Its activity is regulated as follows. Present in an inactive conformation in the absence of bound ligand. CSF1 or IL34 binding leads to dimerization and activation by autophosphorylation on tyrosine residues. Its function is as follows. Tyrosine-protein kinase that acts as a cell-surface receptor for CSF1 and IL34 and plays an essential role in the regulation of survival, proliferation and differentiation of hematopoietic precursor cells, especially mononuclear phagocytes, such as macrophages and monocytes. Promotes the release of pro-inflammatory chemokines in response to IL34 and CSF1, and thereby plays an important role in innate immunity and in inflammatory processes. Plays an important role in the regulation of osteoclast proliferation and differentiation, the regulation of bone resorption, and is required for normal bone and tooth development. Required for normal male and female fertility, and for normal development of milk ducts and acinar structures in the mammary gland during pregnancy. Promotes reorganization of the actin cytoskeleton, regulates formation of membrane ruffles, cell adhesion and cell migration, and promotes cancer cell invasion. Activates several signaling pathways in response to ligand binding, including the ERK1/2 and the JNK pathway. Phosphorylates PIK3R1, PLCG2, GRB2, SLA2 and CBL. Activation of PLCG2 leads to the production of the cellular signaling molecules diacylglycerol and inositol 1,4,5-trisphosphate, that then lead to the activation of protein kinase C family members, especially PRKCD. Phosphorylation of PIK3R1, the regulatory subunit of phosphatidylinositol 3-kinase, leads to activation of the AKT1 signaling pathway. Activated CSF1R also mediates activation of the MAP kinases MAPK1/ERK2 and/or MAPK3/ERK1, and of the SRC family kinases SRC, FYN and YES1. Activated CSF1R transmits signals both via proteins that directly interact with phosphorylated tyrosine residues in its intracellular domain, or via adapter proteins, such as GRB2. Promotes activation of STAT family members STAT3, STAT5A and/or STAT5B. Promotes tyrosine phosphorylation of SHC1 and INPP5D/SHIP-1. Receptor signaling is down-regulated by protein phosphatases, such as INPP5D/SHIP-1, that dephosphorylate the receptor and its downstream effectors, and by rapid internalization of the activated receptor. In the central nervous system, may play a role in the development of microglia macrophages. In Felis catus (Cat), this protein is Macrophage colony-stimulating factor 1 receptor (CSF1R).